A 552-amino-acid chain; its full sequence is 3-hydroxy-3-methylglutaryl-coenzyme A reductase 1 (552 aa).

Low complexity-rich tracts occupy residues 79–99 and 112–122; these read QHNQQQQQKQQPSQDYIQQPQ and QQQQQQQQQQQ. Residues 79–138 are disordered; the sequence is QHNQQQQQKQQPSQDYIQQPQNDNNINSGKEQEQQQQQQQQQQQTPDITNQPTKTNKKIP. The segment covering 123–132 has biased composition (polar residues); that stretch reads TPDITNQPTK. Glu237 (charge relay system) is an active-site residue. N-linked (GlcNAc...) asparagine glycosylation is present at Asn288. Lys369 acts as the Charge relay system in catalysis. An N-linked (GlcNAc...) asparagine glycan is attached at Asn375. Catalysis depends on Asp445, which acts as the Charge relay system. His543 (proton donor) is an active-site residue.

The protein belongs to the HMG-CoA reductase family.

It is found in the endoplasmic reticulum membrane. The enzyme catalyses (R)-mevalonate + 2 NADP(+) + CoA = (3S)-3-hydroxy-3-methylglutaryl-CoA + 2 NADPH + 2 H(+). Its pathway is metabolic intermediate biosynthesis; (R)-mevalonate biosynthesis; (R)-mevalonate from acetyl-CoA: step 3/3. Functionally, this transmembrane glycoprotein is involved in the control of cholesterol biosynthesis. It is the rate-limiting enzyme of the sterol biosynthesis. In Dictyostelium discoideum (Social amoeba), this protein is 3-hydroxy-3-methylglutaryl-coenzyme A reductase 1 (hmgA).